Here is a 197-residue protein sequence, read N- to C-terminus: Rac-like GTP-binding protein ARAC6 (197 aa).

A GTP-binding site is contributed by 13–20 (GDGAVGKT). Residues 35–43 (YVPTVFDNF) carry the Effector region motif. GTP-binding positions include 60–64 (DTAGQ) and 118–121 (TKLD). S160 provides a ligand contact to GDP. Residue C194 is modified to Cysteine methyl ester. C194 carries the S-geranylgeranyl cysteine lipid modification. Positions 195–197 (SIL) are cleaved as a propeptide — removed in mature form.

This sequence belongs to the small GTPase superfamily. Rho family. In terms of assembly, interacts with SPK1. As to expression, ubiquitous. Preferentially expressed in mature pollen and pollen tubes.

It is found in the cytoplasm. It localises to the membrane. Functionally, may be involved in cell polarity control during the actin-dependent tip growth of pollen tubes. Inactive GDP-bound Rho GTPases reside in the cytosol, are found in a complex with Rho GDP-dissociation inhibitors (Rho GDIs), and are released from the GDI protein in order to translocate to membranes upon activation. This chain is Rac-like GTP-binding protein ARAC6 (ARAC6), found in Arabidopsis thaliana (Mouse-ear cress).